Consider the following 97-residue polypeptide: MALLIIILSMFYLGLMGILLNRLHFLSILLCLELLLISLFIGIATWNTSNSIPQNTTFNLLLLTLSACEASIGLSLMVALSRTHSSDLVASLSLLQY.

Helical transmembrane passes span 1 to 21 (MALL…ILLN), 23 to 43 (LHFL…FIGI), and 60 to 80 (LLLL…MVAL).

It belongs to the complex I subunit 4L family.

The protein localises to the mitochondrion membrane. It catalyses the reaction a ubiquinone + NADH + 5 H(+)(in) = a ubiquinol + NAD(+) + 4 H(+)(out). Functionally, core subunit of the mitochondrial membrane respiratory chain NADH dehydrogenase (Complex I) that is believed to belong to the minimal assembly required for catalysis. Complex I functions in the transfer of electrons from NADH to the respiratory chain. The immediate electron acceptor for the enzyme is believed to be ubiquinone. The protein is NADH-ubiquinone oxidoreductase chain 4L (ND4L) of Paracentrotus lividus (Common sea urchin).